Here is a 209-residue protein sequence, read N- to C-terminus: Large ribosomal subunit protein uL3 (209 aa).

N5-methylglutamine is present on Gln150.

The protein belongs to the universal ribosomal protein uL3 family. As to quaternary structure, part of the 50S ribosomal subunit. Forms a cluster with proteins L14 and L19. In terms of processing, methylated by PrmB.

Its function is as follows. One of the primary rRNA binding proteins, it binds directly near the 3'-end of the 23S rRNA, where it nucleates assembly of the 50S subunit. The protein is Large ribosomal subunit protein uL3 of Salmonella arizonae (strain ATCC BAA-731 / CDC346-86 / RSK2980).